The following is a 469-amino-acid chain: Desmin (469 aa).

The tract at residues 2-107 is head; it reads SQAYSSSQRV…QEFLTTRTNE (106 aa). At S7 the chain carries Phosphoserine; by CDK1. The residue at position 12 (S12) is a Phosphoserine; by AURKB. Position 16 is an omega-N-methylarginine (R16). The residue at position 17 (T17) is a Phosphothreonine; by AURKB and ROCK1. 2 positions are modified to phosphoserine; by CDK1: S28 and S32. R37 bears the Asymmetric dimethylarginine; alternate mark. R37 is subject to Omega-N-methylarginine; alternate. Residue S45 is modified to Phosphoserine. R58 is subject to ADP-ribosylarginine. A Phosphoserine; by AURKB modification is found at S60. Residue R70 is modified to Omega-N-methylarginine. At T76 the chain carries Phosphothreonine; by ROCK1. Position 81 is a phosphoserine (S81). In terms of domain architecture, IF rod spans 107-415; the sequence is EKVELQELND…KLLEGEESRI (309 aa). A coil 1A region spans residues 108 to 140; sequence KVELQELNDRFANYIEKVRFLEQQNAALAAEVN. The interval 141–150 is linker 1; sequence RLKGREPTRV. The coil 1B stretch occupies residues 151–251; sequence AEIYEEELRE…HEEEIRELQA (101 aa). Residues 252 to 267 form a linker 12 region; it reads QLQEQQVQVEMDMSKP. Residues 267-414 form an interaction with NEB region; sequence PDLTAALRDI…RKLLEGEESR (148 aa). The segment at 268 to 286 is coil 2A; that stretch reads DLTAALRDIRAQYETIAAK. The segment at 287–294 is linker 2; that stretch reads NISEAEEW. Phosphoserine occurs at positions 289, 357, 360, and 423. The coil 2B stretch occupies residues 295–411; that stretch reads YKSKVSDLTQ…ATYRKLLEGE (117 aa). The tail stretch occupies residues 412 to 469; that stretch reads ESRINLPIQTYSALNFRETSPEQRGSEVHTKKTVMIKTIETRDGEVVSEATQQQHEVL. Residues 437–452 form an interaction with CRYAB region; the sequence is SEVHTKKTVMIKTIET.

Belongs to the intermediate filament family. Homomer. Interacts with DST. Interacts with MTM1. Interacts with EPPK1; interaction is dependent of higher-order structure of intermediate filament. Interacts with CRYAB. Interacts with NEB (via nebulin repeats 160-164). Interacts (via rod region) with NEBL (via nebulin repeats 1-5). Interacts with ASB2; the interaction targets DES for proteasomal degradation. Interacts with PKP1. Interacts with FLII. In terms of processing, ADP-ribosylation prevents ability to form intermediate filaments. Phosphorylation at Ser-7, Ser-28 and Ser-32 by CDK1, phosphorylation at Ser-60 by AURKB and phosphorylation at Thr-76 by ROCK1 contribute to efficient separation of desmin intermediate filaments during mitosis. Post-translationally, ubiquitination by a SCF-like complex containing ASB2 leads to proteasomal degradation.

The protein resides in the cytoplasm. Its subcellular location is the myofibril. It localises to the sarcomere. It is found in the z line. The protein localises to the cell membrane. The protein resides in the sarcolemma. Its subcellular location is the nucleus. It localises to the cell tip. It is found in the nucleus envelope. Muscle-specific type III intermediate filament essential for proper muscular structure and function. Plays a crucial role in maintaining the structure of sarcomeres, inter-connecting the Z-disks and forming the myofibrils, linking them not only to the sarcolemmal cytoskeleton, but also to the nucleus and mitochondria, thus providing strength for the muscle fiber during activity. In adult striated muscle they form a fibrous network connecting myofibrils to each other and to the plasma membrane from the periphery of the Z-line structures. May act as a sarcomeric microtubule-anchoring protein: specifically associates with detyrosinated tubulin-alpha chains, leading to buckled microtubules and mechanical resistance to contraction. Required for nuclear membrane integrity, via anchoring at the cell tip and nuclear envelope, resulting in maintenance of microtubule-derived intracellular mechanical forces. Contributes to the transcriptional regulation of the NKX2-5 gene in cardiac progenitor cells during a short period of cardiomyogenesis and in cardiac side population stem cells in the adult. Plays a role in maintaining an optimal conformation of nebulette (NEB) on heart muscle sarcomeres to bind and recruit cardiac alpha-actin. The chain is Desmin (DES) from Canis lupus familiaris (Dog).